The primary structure comprises 73 residues: Probable minor pilin MMP0528 (73 aa).

The propeptide occupies Met-1 to Gly-10. Residues Gln-11–Leu-19 carry the QXSXEXXXL motif.

In terms of processing, the N-terminus is probably cleaved by the prepilin peptidase EppA, which recognizes the class III signal sequence.

The protein resides in the secreted. It localises to the cell surface. It is found in the fimbrium. The polypeptide is Probable minor pilin MMP0528 (Methanococcus maripaludis (strain DSM 14266 / JCM 13030 / NBRC 101832 / S2 / LL)).